A 63-amino-acid polypeptide reads, in one-letter code: Large ribosomal subunit protein bL28 (63 aa).

This sequence belongs to the bacterial ribosomal protein bL28 family.

This Solibacter usitatus (strain Ellin6076) protein is Large ribosomal subunit protein bL28.